A 294-amino-acid polypeptide reads, in one-letter code: Formamidopyrimidine-DNA glycosylase (294 aa).

Pro2 acts as the Schiff-base intermediate with DNA in catalysis. The Proton donor role is filled by Glu3. Lys58 acts as the Proton donor; for beta-elimination activity in catalysis. His105, Arg124, and Lys167 together coordinate DNA. The FPG-type zinc-finger motif lies at 258–294 (QVYDREGEPCRTRGCKGTVKRFTQNGRSTFWCPSCQK). Arg284 acts as the Proton donor; for delta-elimination activity in catalysis.

The protein belongs to the FPG family. Monomer. Zn(2+) is required as a cofactor.

It catalyses the reaction Hydrolysis of DNA containing ring-opened 7-methylguanine residues, releasing 2,6-diamino-4-hydroxy-5-(N-methyl)formamidopyrimidine.. The catalysed reaction is 2'-deoxyribonucleotide-(2'-deoxyribose 5'-phosphate)-2'-deoxyribonucleotide-DNA = a 3'-end 2'-deoxyribonucleotide-(2,3-dehydro-2,3-deoxyribose 5'-phosphate)-DNA + a 5'-end 5'-phospho-2'-deoxyribonucleoside-DNA + H(+). Its function is as follows. Involved in base excision repair of DNA damaged by oxidation or by mutagenic agents. Acts as a DNA glycosylase that recognizes and removes damaged bases. Has a preference for oxidized purines, such as 7,8-dihydro-8-oxoguanine (8-oxoG). Has AP (apurinic/apyrimidinic) lyase activity and introduces nicks in the DNA strand. Cleaves the DNA backbone by beta-delta elimination to generate a single-strand break at the site of the removed base with both 3'- and 5'-phosphates. This is Formamidopyrimidine-DNA glycosylase from Afipia carboxidovorans (strain ATCC 49405 / DSM 1227 / KCTC 32145 / OM5) (Oligotropha carboxidovorans).